Here is a 284-residue protein sequence, read N- to C-terminus: Bifunctional protein FolD (284 aa).

Residues 166-168 (GAS), Ser-191, and Ile-232 each bind NADP(+).

Belongs to the tetrahydrofolate dehydrogenase/cyclohydrolase family. In terms of assembly, homodimer.

It catalyses the reaction (6R)-5,10-methylene-5,6,7,8-tetrahydrofolate + NADP(+) = (6R)-5,10-methenyltetrahydrofolate + NADPH. The catalysed reaction is (6R)-5,10-methenyltetrahydrofolate + H2O = (6R)-10-formyltetrahydrofolate + H(+). Its pathway is one-carbon metabolism; tetrahydrofolate interconversion. Its function is as follows. Catalyzes the oxidation of 5,10-methylenetetrahydrofolate to 5,10-methenyltetrahydrofolate and then the hydrolysis of 5,10-methenyltetrahydrofolate to 10-formyltetrahydrofolate. This chain is Bifunctional protein FolD, found in Neisseria gonorrhoeae (strain ATCC 700825 / FA 1090).